The following is a 58-amino-acid chain: MSKTVVRKNESLEDALRRFKRSVSKSGTIQEVRKREFYEKPSVKRKKKSEAARKRKFK.

Belongs to the bacterial ribosomal protein bS21 family.

This is Small ribosomal subunit protein bS21 from Staphylococcus aureus (strain bovine RF122 / ET3-1).